The sequence spans 184 residues: Ras-related protein Rap-1b (184 aa).

GTP is bound at residue 10–18 (GSGGVGKSA). The interaction with KRIT1 stretch occupies residues 25 to 67 (QGIFVEKYDPTIEDSYRKQVEVDAQQCMLEILDTAGTEQFTAM). The Effector region motif lies at 32–40 (YDPTIEDSY). S39 is subject to ADP-ribosylserine; by botulinum toxin. Residues 57–61 (DTAGT), 116–119 (NKCD), and 147–149 (SAK) contribute to the GTP site. The residue at position 179 (S179) is a Phosphoserine; by PKA. C181 is modified (cysteine methyl ester). A lipid anchor (S-geranylgeranyl cysteine) is attached at C181. Residues 182–184 (QLL) constitute a propeptide, removed in mature form.

Belongs to the small GTPase superfamily. Ras family. In terms of assembly, heterodimer with RAP1GAP. Interacts with EPAC2. Interacts with SGSM1. Interacts with SGSM2. Interacts with SGSM3. Interacts with KRIT1. Interacts with RAP1GDS1.

It is found in the cell membrane. It localises to the cytoplasm. Its subcellular location is the cytosol. The protein localises to the cell junction. It carries out the reaction GTP + H2O = GDP + phosphate + H(+). With respect to regulation, activated by guanine nucleotide-exchange factor (GEF) EPAC2 in a cAMP-dependent manner. Functionally, GTP-binding protein that possesses intrinsic GTPase activity. Contributes to the polarizing activity of KRIT1 and CDH5 in the establishment and maintenance of correct endothelial cell polarity and vascular lumen. Required for the localization of phosphorylated PRKCZ, PARD3 and TIAM1 to the cell junction. Plays a role in the establishment of basal endothelial barrier function. In Rattus norvegicus (Rat), this protein is Ras-related protein Rap-1b (Rap1b).